The sequence spans 393 residues: MIETDVLVIGGGPAGSSAAKHAALGGAKVILLDKRSEIGAPKRCAEGVSKKGLAKLGIEPSPRWITKEIDGVRLTSPDGTDVWLTEEEIELPEAGYILERKVFDKHMAMDAARAGAEIRIKTLATGMDKIEDGFIVSTESMGKTEEIKAKIVIAADGPEGHVARWAGLKGSAKAKEMESGVQYEMVNVEFDREAVIEFYFGSCAPGGYVWIFPKGDDIANVGLAILQHKATKPAIEYLDDFIAKCPATKNAQAVELNVGGDPVGGMPKKMYDDNILVCGDAAGQVNPLTGGGIISGMTGGMYAGQVAAEAIKEGDHSKKFLKKYDKITRDDLSHEIDKYKKVQEYMLTLSDEELDNIAHAFQDVNFEKISTTELVKALVKVSPKALLKLGKFI.

Residues Ala14, Asp33, Cys44, Ala45, Gly47, Arg100, Ala124, Asp280, Gly292, and Ile293 each contribute to the FAD site.

It belongs to the geranylgeranyl reductase family. DGGGPL reductase subfamily. Requires FAD as cofactor.

The catalysed reaction is a 2,3-bis-O-phytanyl-sn-glycerol 1-phospholipid + 8 A = a 2,3-bis-O-(geranylgeranyl)-sn-glycerol 1-phospholipid + 8 AH2. The enzyme catalyses 2,3-bis-O-(phytanyl)-sn-glycerol 1-phosphate + 8 A = 2,3-bis-O-(geranylgeranyl)-sn-glycerol 1-phosphate + 8 AH2. It carries out the reaction CDP-2,3-bis-O-(geranylgeranyl)-sn-glycerol + 8 AH2 = CDP-2,3-bis-O-(phytanyl)-sn-glycerol + 8 A. It catalyses the reaction archaetidylserine + 8 AH2 = 2,3-bis-O-phytanyl-sn-glycero-3-phospho-L-serine + 8 A. Its pathway is membrane lipid metabolism; glycerophospholipid metabolism. Is involved in the reduction of 2,3-digeranylgeranylglycerophospholipids (unsaturated archaeols) into 2,3-diphytanylglycerophospholipids (saturated archaeols) in the biosynthesis of archaeal membrane lipids. Catalyzes the formation of archaetidic acid (2,3-di-O-phytanyl-sn-glyceryl phosphate) from 2,3-di-O-geranylgeranylglyceryl phosphate (DGGGP) via the hydrogenation of each double bond of the isoprenoid chains. Is also probably able to reduce double bonds of geranyl groups in CDP-2,3-bis-O-(geranylgeranyl)-sn-glycerol and archaetidylserine, thus acting at various stages in the biosynthesis of archaeal membrane lipids. This chain is Digeranylgeranylglycerophospholipid reductase, found in Methanobrevibacter smithii (strain ATCC 35061 / DSM 861 / OCM 144 / PS).